A 215-amino-acid chain; its full sequence is High mobility group protein B1 (215 aa).

1–10 (MGKGDPKKPR) is a heparin binding site. The tract at residues 1 to 97 (MGKGDPKKPR…KFKDPNAPKR (97 aa)) is sufficient for interaction with HAVCR2. Residues K3, K7, K8, and K12 each carry the N6-acetyllysine modification. The LPS binding (delipidated) stretch occupies residues 3–15 (KGDPKKPRGKMSS). A DNA-binding region (HMG box 1) is located at residues 9-79 (PRGKMSSYAF…RYEREMKTYI (71 aa)). Residue C23 is modified to Cysteine sulfonic acid (-SO3H); alternate. Residues C23 and C45 are joined by a disulfide bond. Positions 27–43 (HKKKHPDASVNFSEFSK) are NLS 1. The Nuclear localization signal (NLS) 1 signature appears at 27–43 (HKKKHPDASVNFSEFSK). An N6-acetyllysine mark is found at K28, K29, and K30. Residue K28 forms an Isoglutamyl lysine isopeptide (Lys-Gln) (interchain with Q-?) linkage. S35 bears the Phosphoserine mark. K43 bears the N6-acetyllysine mark. Isoglutamyl lysine isopeptide (Lys-Gln) (interchain with Q-?) cross-links involve residues K43 and K44. A Cysteine sulfonic acid (-SO3H); alternate modification is found at C45. Residue K68 forms an Isoglutamyl lysine isopeptide (Lys-Gln) (interchain with Q-?) linkage. Residues 76 to 95 (KTYIPPKGETKKKFKDPNAP) form a disordered region. An LPS binding (Lipid A) region spans residues 80–96 (PPKGETKKKFKDPNAPK). Residues 83 to 94 (GETKKKFKDPNA) show a composition bias toward basic and acidic residues. The tract at residues 89–108 (FKDPNAPKRPPSAFFLFCSE) is cytokine-stimulating activity. K90 carries the N6-acetyllysine modification. The HMG box 2 DNA-binding region spans 95–163 (PKRPPSAFFL…KYEKDIAAYR (69 aa)). Phosphoserine is present on S100. Residue C106 is modified to Cysteine sulfonic acid (-SO3H). K127, K128, K141, K172, K173, K177, and K180 each carry N6-acetyllysine. A binding to AGER/RAGE region spans residues 150–183 (KLKEKYEKDIAAYRAKGKPDAAKKGVVKAEKSKK). Over residues 161–179 (AYRAKGKPDAAKKGVVKAE) the composition is skewed to basic and acidic residues. The disordered stretch occupies residues 161 to 215 (AYRAKGKPDAAKKGVVKAEKSKKKKEEEEDEEDEEDEEEEEDEEDEDEEEDDDDE). An NLS 2 region spans residues 178–184 (AEKSKKK). The Nuclear localization signal (NLS) 2 motif lies at 178–184 (AEKSKKK). Residue K180 forms an Isoglutamyl lysine isopeptide (Lys-Gln) (interchain with Q-?) linkage. The residue at position 181 (S181) is an ADP-ribosylserine. N6-acetyllysine is present on residues K182, K183, K184, and K185. Residues K182, K183, and K184 each participate in an isoglutamyl lysine isopeptide (Lys-Gln) (interchain with Q-?) cross-link. Residues 187–215 (EEEDEEDEEDEEEEEDEEDEDEEEDDDDE) show a composition bias toward acidic residues.

It belongs to the HMGB family. In terms of assembly, interacts (fully reduced HMGB1) with CXCL12; probably in a 1:2 ratio involving two molecules of CXCL12, each interacting with one HMG box of HMGB1; inhibited by glycyrrhizin. Associates with the TLR4:LY96 receptor complex. Component of the RAG complex composed of core components RAG1 and RAG2, and associated component HMGB1 or HMGB2. Interacts (in cytoplasm upon starvation) with BECN1; inhibits the interaction of BECN1 and BCL2 leading to promotion of autophagy. Interacts with KPNA1; involved in nuclear import. Interacts with SREBF1, TLR2, TLR4, TLR9, PTPRZ1, APEX1, FEN1, POLB, TERT. Interacts with IL1B, AGER, MSH2, XPA, XPC, HNF1A, TP53. Interacts with CD24; the probable CD24:SIGLEC10 complex is proposed to inhibit HGMB1-mediated tissue damage immune response. Interacts with THBD; prevents HGMB1 interaction with ACER/RAGE and inhibits HGMB1 pro-inflammatory activity. Interacts with HAVCR2; impairs HMGB1 binding to B-DNA and likely HMGB1-mediated innate immune response. Interacts with XPO1; mediating nuclear export. Interacts with receptor RAGE/AGER. Phosphorylated at serine residues. Phosphorylation in both NLS regions is required for cytoplasmic translocation followed by secretion. Post-translationally, acetylated on multiple sites upon stimulation with LPS. Acetylation on lysine residues in the nuclear localization signals (NLS 1 and NLS 2) leads to cytoplasmic localization and subsequent secretion. Acetylation on Lys-3 results in preferential binding to DNA ends and impairs DNA bending activity. In terms of processing, reduction/oxidation of cysteine residues Cys-23, Cys-45 and Cys-106 and a possible intramolecular disulfide bond involving Cys-23 and Cys-45 give rise to different redox forms with specific functional activities in various cellular compartments: 1- fully reduced HMGB1 (HMGB1C23hC45hC106h), 2- disulfide HMGB1 (HMGB1C23-C45C106h) and 3- sulfonyl HMGB1 (HMGB1C23soC45soC106so). Poly-ADP-ribosylated by PARP1 when secreted following stimulation with LPS. Post-translationally, in vitro cleavage by CASP1 is liberating a HMG box 1-containing peptide which may mediate immunogenic activity; the peptide antagonizes apoptosis-induced immune tolerance. Can be proteolytically cleaved by a thrombin:thrombomodulin complex; reduces binding to heparin and pro-inflammatory activities. In terms of processing, forms covalent cross-links mediated by transglutaminase TGM2, between a glutamine and the epsilon-amino group of a lysine residue, forming homopolymers and heteropolymers.

It localises to the nucleus. Its subcellular location is the chromosome. The protein localises to the cytoplasm. The protein resides in the secreted. It is found in the cell membrane. It localises to the endosome. Its subcellular location is the endoplasmic reticulum-Golgi intermediate compartment. Functionally, multifunctional redox sensitive protein with various roles in different cellular compartments. In the nucleus is one of the major chromatin-associated non-histone proteins and acts as a DNA chaperone involved in replication, transcription, chromatin remodeling, V(D)J recombination, DNA repair and genome stability. Proposed to be an universal biosensor for nucleic acids. Promotes host inflammatory response to sterile and infectious signals and is involved in the coordination and integration of innate and adaptive immune responses. In the cytoplasm functions as a sensor and/or chaperone for immunogenic nucleic acids implicating the activation of TLR9-mediated immune responses, and mediates autophagy. Acts as a danger-associated molecular pattern (DAMP) molecule that amplifies immune responses during tissue injury. Released to the extracellular environment can bind DNA, nucleosomes, IL-1 beta, CXCL12, AGER isoform 2/sRAGE, lipopolysaccharide (LPS) and lipoteichoic acid (LTA), and activates cells through engagement of multiple surface receptors. In the extracellular compartment fully reduced HMGB1 (released by necrosis) acts as a chemokine, disulfide HMGB1 (actively secreted) as a cytokine, and sulfonyl HMGB1 (released from apoptotic cells) promotes immunological tolerance. Has proangiogenic activity. May be involved in platelet activation. Binds to phosphatidylserine and phosphatidylethanolamide. Bound to RAGE mediates signaling for neuronal outgrowth. May play a role in accumulation of expanded polyglutamine (polyQ) proteins. Its function is as follows. Nuclear functions are attributed to fully reduced HGMB1. Associates with chromatin and binds DNA with a preference to non-canonical DNA structures such as single-stranded DNA, DNA-containing cruciforms or bent structures, supercoiled DNA and ZDNA. Can bent DNA and enhance DNA flexibility by looping thus providing a mechanism to promote activities on various gene promoters by enhancing transcription factor binding and/or bringing distant regulatory sequences into close proximity. May be involved in nucleotide excision repair (NER), mismatch repair (MMR) and base excision repair (BER) pathways, and double strand break repair such as non-homologous end joining (NHEJ). Involved in V(D)J recombination by acting as a cofactor of the RAG complex: acts by stimulating cleavage and RAG protein binding at the 23 bp spacer of conserved recombination signal sequences (RSS). In vitro can displace histone H1 from highly bent DNA. Can restructure the canonical nucleosome leading to relaxation of structural constraints for transcription factor-binding. Enhances binding of sterol regulatory element-binding proteins (SREBPs) such as SREBF1 to their cognate DNA sequences and increases their transcriptional activities. Facilitates binding of TP53 to DNA. May be involved in mitochondrial quality control and autophagy in a transcription-dependent fashion implicating HSPB1. Can modulate the activity of the telomerase complex and may be involved in telomere maintenance. In the cytoplasm proposed to dissociate the BECN1:BCL2 complex via competitive interaction with BECN1 leading to autophagy activation. Can protect BECN1 and ATG5 from calpain-mediated cleavage and thus proposed to control their proautophagic and proapoptotic functions and to regulate the extent and severity of inflammation-associated cellular injury. In myeloid cells has a protective role against endotoxemia and bacterial infection by promoting autophagy. Involved in endosomal translocation and activation of TLR9 in response to CpG-DNA in macrophages. In terms of biological role, in the extracellular compartment (following either active secretion or passive release) involved in regulation of the inflammatory response. Fully reduced HGMB1 (which subsequently gets oxidized after release) in association with CXCL12 mediates the recruitment of inflammatory cells during the initial phase of tissue injury; the CXCL12:HMGB1 complex triggers CXCR4 homodimerization. Induces the migration of monocyte-derived immature dendritic cells and seems to regulate adhesive and migratory functions of neutrophils implicating AGER/RAGE and ITGAM. Can bind to various types of DNA and RNA including microbial unmethylated CpG-DNA to enhance the innate immune response to nucleic acids. Proposed to act in promiscuous DNA/RNA sensing which cooperates with subsequent discriminative sensing by specific pattern recognition receptors. Promotes extracellular DNA-induced AIM2 inflammasome activation implicating AGER/RAGE. Disulfide HMGB1 binds to transmembrane receptors, such as AGER/RAGE, TLR2, TLR4 and probably TREM1, thus activating their signal transduction pathways. Mediates the release of cytokines/chemokines such as TNF, IL-1, IL-6, IL-8, CCL2, CCL3, CCL4 and CXCL10. Promotes secretion of interferon-gamma by macrophage-stimulated natural killer (NK) cells in concert with other cytokines like IL-2 or IL-12. TLR4 is proposed to be the primary receptor promoting macrophage activation and signaling through TLR4 seems to implicate LY96/MD-2. In bacterial LPS- or LTA-mediated inflammatory responses binds to the endotoxins and transfers them to CD14 for signaling to the respective TLR4:LY96 and TLR2 complexes. Contributes to tumor proliferation by association with ACER/RAGE. Can bind to IL1-beta and signals through the IL1R1:IL1RAP receptor complex. Binding to class A CpG activates cytokine production in plasmacytoid dendritic cells implicating TLR9, MYD88 and AGER/RAGE and can activate autoreactive B cells. Via HMGB1-containing chromatin immune complexes may also promote B cell responses to endogenous TLR9 ligands through a B-cell receptor (BCR)-dependent and ACER/RAGE-independent mechanism. Inhibits phagocytosis of apoptotic cells by macrophages; the function is dependent on poly-ADP-ribosylation and involves binding to phosphatidylserine on the cell surface of apoptotic cells. In adaptive immunity may be involved in enhancing immunity through activation of effector T-cells and suppression of regulatory T (TReg) cells. In contrast, without implicating effector or regulatory T-cells, required for tumor infiltration and activation of T-cells expressing the lymphotoxin LTA:LTB heterotrimer thus promoting tumor malignant progression. Also reported to limit proliferation of T-cells. Released HMGB1:nucleosome complexes formed during apoptosis can signal through TLR2 to induce cytokine production. Involved in induction of immunological tolerance by apoptotic cells; its pro-inflammatory activities when released by apoptotic cells are neutralized by reactive oxygen species (ROS)-dependent oxidation specifically on Cys-106. During macrophage activation by activated lymphocyte-derived self apoptotic DNA (ALD-DNA) promotes recruitment of ALD-DNA to endosomes. The polypeptide is High mobility group protein B1 (HMGB1) (Canis lupus familiaris (Dog)).